A 205-amino-acid chain; its full sequence is Adenylyl-sulfate kinase (205 aa).

31 to 38 (GLSGAGKS) contacts ATP. Ser-105 functions as the Phosphoserine intermediate in the catalytic mechanism.

Belongs to the APS kinase family.

The catalysed reaction is adenosine 5'-phosphosulfate + ATP = 3'-phosphoadenylyl sulfate + ADP + H(+). It functions in the pathway sulfur metabolism; hydrogen sulfide biosynthesis; sulfite from sulfate: step 2/3. Catalyzes the synthesis of activated sulfate. The sequence is that of Adenylyl-sulfate kinase from Shewanella sp. (strain MR-4).